A 245-amino-acid chain; its full sequence is Caffeoyl-CoA O-methyltransferase (245 aa).

Lys19 contributes to the substrate binding site. S-adenosyl-L-methionine contacts are provided by residues Thr61, Glu83, 85 to 86 (GV), Ser91, Asp109, and Ala138. Substrate is bound at residue Asp161. Asp161 lines the a divalent metal cation pocket. Asp163 provides a ligand contact to S-adenosyl-L-methionine. Asp187 and Asn188 together coordinate a divalent metal cation. Asn192 provides a ligand contact to substrate.

It belongs to the class I-like SAM-binding methyltransferase superfamily. Cation-dependent O-methyltransferase family. CCoAMT subfamily. A divalent metal cation serves as cofactor.

The enzyme catalyses (E)-caffeoyl-CoA + S-adenosyl-L-methionine = (E)-feruloyl-CoA + S-adenosyl-L-homocysteine + H(+). Its pathway is aromatic compound metabolism; phenylpropanoid biosynthesis. In terms of biological role, methylates caffeoyl-CoA to feruloyl-CoA and 5-hydroxyferuloyl-CoA to sinapoyl-CoA. Plays a role in the synthesis of feruloylated polysaccharides. Involved in the reinforcement of the plant cell wall. Also involved in the responding to wounding or pathogen challenge by the increased formation of cell wall-bound ferulic acid polymers. The protein is Caffeoyl-CoA O-methyltransferase (CCOAOMT) of Zinnia elegans (Garden zinnia).